Reading from the N-terminus, the 116-residue chain is Putative iron-sulfur cluster insertion protein ErpA (116 aa).

Residues Cys44, Cys108, and Cys110 each coordinate iron-sulfur cluster.

Belongs to the HesB/IscA family. In terms of assembly, homodimer. The cofactor is iron-sulfur cluster.

Required for insertion of 4Fe-4S clusters. This is Putative iron-sulfur cluster insertion protein ErpA from Herminiimonas arsenicoxydans.